Reading from the N-terminus, the 349-residue chain is Protein RecA (349 aa).

Residue 64–71 participates in ATP binding; the sequence is GPESSGKT.

Belongs to the RecA family.

The protein localises to the cytoplasm. In terms of biological role, can catalyze the hydrolysis of ATP in the presence of single-stranded DNA, the ATP-dependent uptake of single-stranded DNA by duplex DNA, and the ATP-dependent hybridization of homologous single-stranded DNAs. It interacts with LexA causing its activation and leading to its autocatalytic cleavage. In Rhodopseudomonas palustris (strain ATCC BAA-98 / CGA009), this protein is Protein RecA.